A 554-amino-acid chain; its full sequence is Dihydroxy-acid dehydratase (554 aa).

Position 78 (D78) interacts with Mg(2+). C119 is a binding site for [2Fe-2S] cluster. Mg(2+) is bound by residues D120 and K121. K121 bears the N6-carboxylysine mark. C191 is a binding site for [2Fe-2S] cluster. E444 provides a ligand contact to Mg(2+). S470 (proton acceptor) is an active-site residue.

It belongs to the IlvD/Edd family. As to quaternary structure, homodimer. The cofactor is [2Fe-2S] cluster. It depends on Mg(2+) as a cofactor.

It carries out the reaction (2R)-2,3-dihydroxy-3-methylbutanoate = 3-methyl-2-oxobutanoate + H2O. It catalyses the reaction (2R,3R)-2,3-dihydroxy-3-methylpentanoate = (S)-3-methyl-2-oxopentanoate + H2O. It functions in the pathway amino-acid biosynthesis; L-isoleucine biosynthesis; L-isoleucine from 2-oxobutanoate: step 3/4. It participates in amino-acid biosynthesis; L-valine biosynthesis; L-valine from pyruvate: step 3/4. Its function is as follows. Functions in the biosynthesis of branched-chain amino acids. Catalyzes the dehydration of (2R,3R)-2,3-dihydroxy-3-methylpentanoate (2,3-dihydroxy-3-methylvalerate) into 2-oxo-3-methylpentanoate (2-oxo-3-methylvalerate) and of (2R)-2,3-dihydroxy-3-methylbutanoate (2,3-dihydroxyisovalerate) into 2-oxo-3-methylbutanoate (2-oxoisovalerate), the penultimate precursor to L-isoleucine and L-valine, respectively. This chain is Dihydroxy-acid dehydratase, found in Nitratidesulfovibrio vulgaris (strain DP4) (Desulfovibrio vulgaris).